A 620-amino-acid polypeptide reads, in one-letter code: MAU2 chromatid cohesion factor homolog (620 aa).

TPR repeat units lie at residues 452–485 and 492–525; these read GGFY…ANAE and SCSL…ASKI.

This sequence belongs to the SCC4/mau-2 family. In terms of assembly, interacts with Nipped-B to form the cohesin loading complex.

It is found in the nucleus. The protein localises to the nucleoplasm. Required for association of the cohesin complex with chromatin during interphase. Plays a role in sister chromatid cohesion and normal progression through prometaphase. The sequence is that of MAU2 chromatid cohesion factor homolog from Drosophila persimilis (Fruit fly).